We begin with the raw amino-acid sequence, 937 residues long: Protocadherin alpha-7 (937 aa).

The signal sequence occupies residues 1 to 29 (MVCPNGYDPGGRHLLLFIIILAAWEAGRG). Cadherin domains follow at residues 30-133 (QLHY…PPVF), 134-242 (PATQ…APVF), 243-350 (DRTL…APQL), 351-455 (TLTS…APAF), 456-565 (AQPE…APAL), and 581-678 (VPRS…APKA). Residues 30–697 (QLHYSVPEEA…GPETELVDVN (668 aa)) lie on the Extracellular side of the membrane. A disulfide bond links Cys-96 and Cys-102. N-linked (GlcNAc...) asparagine glycosylation is found at Asn-254 and Asn-265. Asn-548 carries an N-linked (GlcNAc...) asparagine glycan. Residues 698–718 (VYLIIAICAVSSLLVLTLLLY) traverse the membrane as a helical segment. The Cytoplasmic segment spans residues 719–937 (TALRCSAPSS…GNSTTDNSDQ (219 aa)). Disordered stretches follow at residues 755–795 (RQRV…DWRY) and 814–937 (ILRA…NSDQ). 5 PXXP repeats span residues 774–777 (PSLP), 786–789 (PRQP), 819–822 (PGGP), 860–863 (PGNP), and 878–881 (PGSP). The segment at 774-881 (PSLPQGPSST…PDKFIIPGSP (108 aa)) is 5 X 4 AA repeats of P-X-X-P. Residues 775–787 (SLPQGPSSTDNPR) are compositionally biased toward polar residues. Residues 896-910 (DKSDFITFGKKEETK) show a composition bias toward basic and acidic residues.

As to quaternary structure, forms homodimers in trans (molecules expressed by two different cells). Forms promiscuous heterodimers in cis (at the plasma membrane of the same cell) with other protocadherins.

It is found in the cell membrane. Functionally, calcium-dependent cell-adhesion protein involved in cells self-recognition and non-self discrimination. Thereby, it is involved in the establishment and maintenance of specific neuronal connections in the brain. The sequence is that of Protocadherin alpha-7 from Homo sapiens (Human).